The chain runs to 125 residues: Mediator of RNA polymerase II transcription subunit 11 (125 aa).

This sequence belongs to the Mediator complex subunit 11 family. In terms of assembly, component of the Mediator complex.

It localises to the nucleus. Component of the Mediator complex, a coactivator involved in the regulated transcription of nearly all RNA polymerase II-dependent genes. Mediator functions as a bridge to convey information from gene-specific regulatory proteins to the basal RNA polymerase II transcription machinery. Mediator is recruited to promoters by direct interactions with regulatory proteins and serves as a scaffold for the assembly of a functional pre-initiation complex with RNA polymerase II and the general transcription factors. The polypeptide is Mediator of RNA polymerase II transcription subunit 11 (MED11) (Candida glabrata (strain ATCC 2001 / BCRC 20586 / JCM 3761 / NBRC 0622 / NRRL Y-65 / CBS 138) (Yeast)).